Here is a 248-residue protein sequence, read N- to C-terminus: Ureidoacrylate amidohydrolase RutB (248 aa).

The active-site Proton acceptor is Asp-41. The active site involves Lys-150. Catalysis depends on Cys-183, which acts as the Nucleophile.

Belongs to the isochorismatase family. RutB subfamily.

The catalysed reaction is (Z)-3-ureidoacrylate + H2O + H(+) = (Z)-3-aminoacrylate + NH4(+) + CO2. It catalyses the reaction (Z)-3-ureidoacrylate + H2O = (Z)-3-aminoacrylate + carbamate + H(+). It carries out the reaction (Z)-2-methylureidoacrylate + H2O + H(+) = (Z)-2-methylaminoacrylate + NH4(+) + CO2. Functionally, hydrolyzes ureidoacrylate to form aminoacrylate and carbamate. The carbamate hydrolyzes spontaneously, thereby releasing one of the nitrogen atoms of the pyrimidine ring as ammonia and one of its carbon atoms as CO2. The chain is Ureidoacrylate amidohydrolase RutB from Methylorubrum extorquens (strain ATCC 14718 / DSM 1338 / JCM 2805 / NCIMB 9133 / AM1) (Methylobacterium extorquens).